The primary structure comprises 356 residues: uncharacterized protein (356 aa).

3 helical membrane passes run 258–275 (SALQ…VFYY), 290–312 (PHWL…TEAL), and 325–347 (LVLL…TLFS).

The protein localises to the cell membrane. This is an uncharacterized protein from Archaeoglobus fulgidus (strain ATCC 49558 / DSM 4304 / JCM 9628 / NBRC 100126 / VC-16).